The chain runs to 271 residues: MQKKYYKNHVIQKKWGQIFLKDQNIIHSIISILNLKKYQNVIEIGPGLGALTKPISDIIDFLILIERDPNLVNRLLHTFTSKKVKIFNKDAMTIDFSKLLTNPNQKIRLIGNLPYNISTKLIIHLYKYINIIHDMHFMLQKEVAQRIVAQPNNKAYGRLSIFAQYYCKVQALLEVPKKSFIPIPKVESMIVQFIPYHTNNPYPTVNISLLSLLTKFAFHQRRKIIHNSLSSLLNSTEIIQCGINTESRAENLTIQQFCKLTTILHHKYNLN.

S-adenosyl-L-methionine is bound by residues Leu-20, Gly-45, Glu-66, Asp-90, and Asn-112.

It belongs to the class I-like SAM-binding methyltransferase superfamily. rRNA adenine N(6)-methyltransferase family. RsmA subfamily.

The protein resides in the cytoplasm. The enzyme catalyses adenosine(1518)/adenosine(1519) in 16S rRNA + 4 S-adenosyl-L-methionine = N(6)-dimethyladenosine(1518)/N(6)-dimethyladenosine(1519) in 16S rRNA + 4 S-adenosyl-L-homocysteine + 4 H(+). Specifically dimethylates two adjacent adenosines (A1518 and A1519) in the loop of a conserved hairpin near the 3'-end of 16S rRNA in the 30S particle. May play a critical role in biogenesis of 30S subunits. The sequence is that of Ribosomal RNA small subunit methyltransferase A from Blochmanniella floridana.